Reading from the N-terminus, the 128-residue chain is Small ribosomal subunit protein uS13 (128 aa).

Residues 97 to 128 (PVRGQRTRSNARTRKGPRPSRIKTKKKKEQTV) are disordered. Residues 101 to 128 (QRTRSNARTRKGPRPSRIKTKKKKEQTV) are compositionally biased toward basic residues.

This sequence belongs to the universal ribosomal protein uS13 family. As to quaternary structure, part of the 30S ribosomal subunit. Forms a loose heterodimer with protein S19. Forms two bridges to the 50S subunit in the 70S ribosome.

Functionally, located at the top of the head of the 30S subunit, it contacts several helices of the 16S rRNA. In the 70S ribosome it contacts the 23S rRNA (bridge B1a) and protein L5 of the 50S subunit (bridge B1b), connecting the 2 subunits; these bridges are implicated in subunit movement. Contacts the tRNAs in the A and P-sites. This chain is Small ribosomal subunit protein uS13, found in Pseudothermotoga lettingae (strain ATCC BAA-301 / DSM 14385 / NBRC 107922 / TMO) (Thermotoga lettingae).